The chain runs to 843 residues: Protein P (843 aa).

The segment at 1 to 177 (MPLSYPHFRK…FCGSPYSWEQ (177 aa)) is terminal protein domain (TP). Residues 178–346 (ELQHGSTSLN…YCLSHIINLL (169 aa)) are spacer. Disordered regions lie at residues 228–259 (KQGQLANGKQGRSGRLRSRVHTPTRWPAGVEP) and 283–314 (EKANPSLSTSKRHTSTGNAVELNPVPPSSVGS). Residues 239 to 249 (RSGRLRSRVHT) are compositionally biased toward basic residues. Residues 347–690 (EDWGPCYEHG…YMNLYPVARQ (344 aa)) form a polymerase/reverse transcriptase domain (RT) region. One can recognise a Reverse transcriptase domain in the interval 357-600 (QHYIRTPRTP…YSLHFMGYVI (244 aa)). Residues Asp-429, Asp-551, and Asp-552 each coordinate Mg(2+).

The protein belongs to the hepadnaviridae P protein family.

It catalyses the reaction DNA(n) + a 2'-deoxyribonucleoside 5'-triphosphate = DNA(n+1) + diphosphate. It carries out the reaction Endonucleolytic cleavage to 5'-phosphomonoester.. Its activity is regulated as follows. Activated by host HSP70 and HSP40 in vitro to be able to bind the epsilon loop of the pgRNA. Because deletion of the RNase H region renders the protein partly chaperone-independent, the chaperones may be needed indirectly to relieve occlusion of the RNA-binding site by this domain. Inhibited by several reverse-transcriptase inhibitors: Lamivudine, Adefovir and Entecavir. Its function is as follows. Multifunctional enzyme that converts the viral RNA genome into dsDNA in viral cytoplasmic capsids. This enzyme displays a DNA polymerase activity that can copy either DNA or RNA templates, and a ribonuclease H (RNase H) activity that cleaves the RNA strand of RNA-DNA heteroduplexes in a partially processive 3'- to 5'-endonucleasic mode. Neo-synthesized pregenomic RNA (pgRNA) are encapsidated together with the P protein, and reverse-transcribed inside the nucleocapsid. Initiation of reverse-transcription occurs first by binding the epsilon loop on the pgRNA genome, and is initiated by protein priming, thereby the 5'-end of (-)DNA is covalently linked to P protein. Partial (+)DNA is synthesized from the (-)DNA template and generates the relaxed circular DNA (RC-DNA) genome. After budding and infection, the RC-DNA migrates in the nucleus, and is converted into a plasmid-like covalently closed circular DNA (cccDNA). The activity of P protein does not seem to be necessary for cccDNA generation, and is presumably released from (+)DNA by host nuclear DNA repair machinery. The chain is Protein P from Homo sapiens (Human).